The following is an 821-amino-acid chain: TORTIFOLIA1-like protein 1 (821 aa).

5 HEAT repeats span residues 69 to 110 (PDSP…SYTD), 114 to 151 (SQLA…QFLK), 163 to 201 (SSLV…SATE), 205 to 242 (AAFQ…VGAI), and 245 to 282 (QSLE…HSSS). The residue at position 406 (Ser406) is a Phosphoserine. Disordered regions lie at residues 416-437 (PSRQ…NTSV) and 553-610 (MSIQ…RAWD). The stretch at 501-554 (PPLQRQLLHLERQQTHIMNMLQDFMGGSHDGMISLENRVRGLERIVEEMSREMS) forms a coiled coil. Over residues 579-590 (YGPSSRNTQTST) the composition is skewed to polar residues.

As to expression, expressed at low levels in roots, hypocotyls, stems, flowers, siliques, cotyledons, and leaves. Particularly present in hydathodes of cotyledons and root hairs.

The protein localises to the cytoplasm. It localises to the cytoskeleton. Functionally, plant-specific microtubule-associated protein (MAP) that regulates the orientation of cortical microtubules and the direction of organ growth. In Arabidopsis thaliana (Mouse-ear cress), this protein is TORTIFOLIA1-like protein 1.